The chain runs to 356 residues: Alanine racemase, catabolic (356 aa).

Lys35 (proton acceptor; specific for D-alanine) is an active-site residue. At Lys35 the chain carries N6-(pyridoxal phosphate)lysine. Arg130 is a binding site for substrate. Tyr253 (proton acceptor; specific for L-alanine) is an active-site residue. Substrate is bound at residue Met301.

This sequence belongs to the alanine racemase family. Requires pyridoxal 5'-phosphate as cofactor.

The enzyme catalyses L-alanine = D-alanine. In terms of biological role, isomerizes L-alanine to D-alanine which is then oxidized to pyruvate by DadA. This chain is Alanine racemase, catabolic (dadB), found in Klebsiella aerogenes (Enterobacter aerogenes).